The sequence spans 498 residues: Glycerol kinase (498 aa).

T12 is an ADP binding site. 3 residues coordinate ATP: T12, T13, and S14. Position 12 (T12) interacts with sn-glycerol 3-phosphate. An ADP-binding site is contributed by R16. The sn-glycerol 3-phosphate site is built by R82, E83, Y134, and D241. R82, E83, Y134, D241, and Q242 together coordinate glycerol. ADP-binding residues include T263 and G310. ATP contacts are provided by T263, G310, Q314, and G411. ADP is bound by residues G411 and N415.

This sequence belongs to the FGGY kinase family.

It carries out the reaction glycerol + ATP = sn-glycerol 3-phosphate + ADP + H(+). Its pathway is polyol metabolism; glycerol degradation via glycerol kinase pathway; sn-glycerol 3-phosphate from glycerol: step 1/1. With respect to regulation, inhibited by fructose 1,6-bisphosphate (FBP). Key enzyme in the regulation of glycerol uptake and metabolism. Catalyzes the phosphorylation of glycerol to yield sn-glycerol 3-phosphate. The chain is Glycerol kinase from Herminiimonas arsenicoxydans.